Here is a 2027-residue protein sequence, read N- to C-terminus: Dedicator of cytokinesis protein 3 (2027 aa).

Residues 6-67 (EEEKYGVVIC…PANYIHLKKA (62 aa)) form the SH3 domain. Residues 421 to 598 (RNDLYLTLEK…ESFFISTQLS (178 aa)) enclose the C2 DOCK-type domain. One can recognise a DOCKER domain in the interval 1225-1632 (KSEINKEEMY…LYHEFPGLDK (408 aa)). The residue at position 1655 (Ser-1655) is a Phosphoserine. Disordered stretches follow at residues 1672–1695 (GTGRHSSSSLSSHASSEAGNMMMM), 1731–1768 (SSSQASPSSSSLSSTHSAPSQMITSAPSSTRGSPSLPD), 1846–1925 (DTPP…DEGL), and 1971–2027 (PPKP…RGEQ). Composition is skewed to low complexity over residues 1676–1695 (HSSSSLSSHASSEAGNMMMM) and 1731–1751 (SSSQASPSSSSLSSTHSAPSQ). Residues 1752–1763 (MITSAPSSTRGS) are compositionally biased toward polar residues. Positions 1877–1899 (GSNSTLSGSASSGVSSLSESNFG) are enriched in low complexity. The short motif at 1967 to 1973 (PPALPPK) is the SH3-binding element. Basic and acidic residues-rich tracts occupy residues 1981-1998 (ALEHDEGMLLREEAERPR) and 2011-2027 (VKEEQARLAWEHGRGEQ).

Belongs to the DOCK family. Interacts with presenilin proteins PSEN1 and PSEN2. Interacts with CRK. Expressed in brain, spinal cord, pituitary gland, testis. Not expressed in heart, liver, kidney, spleen and lung. In brain, it is highly expressed in the cerebral cortex and hippocampus, while it is absent in other tissues, except in spinal cord. In the cerebral cortex, it is found within the intermediate (III and IV) and deep (V and VI) layers, whereas it is weakly expressed in superficial layer I. It is also abundant in the piriform cortex. Within the hippocampus, it is expressed in the pyramidal neurons of the CA1, CA2, and CA3 regions and the dentate gyrus.

The protein resides in the cytoplasm. Potential guanine nucleotide exchange factor (GEF). GEF proteins activate some small GTPases by exchanging bound GDP for free GTP. Its interaction with presenilin proteins as well as its ability to stimulate Tau/MAPT phosphorylation suggest that it may be involved in Alzheimer disease. Ectopic expression in nerve cells decreases the secretion of amyloid-beta APBA1 protein and lowers the rate of cell-substratum adhesion, suggesting that it may affect the function of some small GTPase involved in the regulation of actin cytoskeleton or cell adhesion receptors. This chain is Dedicator of cytokinesis protein 3 (Dock3), found in Mus musculus (Mouse).